The chain runs to 350 residues: Inhibitor of nuclear factor kappa-B kinase-interacting protein (350 aa).

Residues 1–11 (MSEVKSRKKSG) show a composition bias toward basic residues. The segment at 1–39 (MSEVKSRKKSGPKGAPAAEPGKRSEGGKTPVARSSGGGG) is disordered. The helical transmembrane segment at 46-62 (CLSLLSLGTCLGLAWFV) threads the bilayer. Residue N144 is glycosylated (N-linked (GlcNAc...) asparagine). A coiled-coil region spans residues 184–217 (GLVTDVISLTDSVQELENKIEKVEKNTVKNIGDL). N-linked (GlcNAc...) asparagine glycosylation occurs at N328.

N-glycosylated. Isoform 4 is glycosylated at Asn-154. In terms of tissue distribution, expressed in vein endothelial cells. Isoform 4 is expressed in lung, kidney, spleen, thymus and skeletal muscle.

It localises to the endoplasmic reticulum membrane. Target of p53/TP53 with pro-apoptotic function. This chain is Inhibitor of nuclear factor kappa-B kinase-interacting protein (IKBIP), found in Homo sapiens (Human).